Consider the following 257-residue polypeptide: Urease accessory protein UreD 3 (257 aa).

The segment at 1-22 is disordered; the sequence is MSVRATARLRAEPDGRDGTALP.

This sequence belongs to the UreD family. As to quaternary structure, ureD, UreF and UreG form a complex that acts as a GTP-hydrolysis-dependent molecular chaperone, activating the urease apoprotein by helping to assemble the nickel containing metallocenter of UreC. The UreE protein probably delivers the nickel.

It is found in the cytoplasm. In terms of biological role, required for maturation of urease via the functional incorporation of the urease nickel metallocenter. The polypeptide is Urease accessory protein UreD 3 (Streptomyces griseus subsp. griseus (strain JCM 4626 / CBS 651.72 / NBRC 13350 / KCC S-0626 / ISP 5235)).